The sequence spans 80 residues: Large ribosomal subunit protein bL31B (80 aa).

Belongs to the bacterial ribosomal protein bL31 family. Type B subfamily. Part of the 50S ribosomal subunit.

In Oenococcus oeni (strain ATCC BAA-331 / PSU-1), this protein is Large ribosomal subunit protein bL31B.